A 395-amino-acid polypeptide reads, in one-letter code: Elongation factor Tu (395 aa).

A tr-type G domain is found at 10 to 204 (KPHVNIGTIG…EVDAYIPTPE (195 aa)). Residues 19–26 (GHVDHGKT) are G1. 19-26 (GHVDHGKT) serves as a coordination point for GTP. Thr-26 serves as a coordination point for Mg(2+). The segment at 60 to 64 (GITIS) is G2. A G3 region spans residues 81–84 (DCPG). Residues 81–85 (DCPGH) and 136–139 (NKCD) each bind GTP. Residues 136-139 (NKCD) form a G4 region. The interval 174 to 176 (SAL) is G5.

This sequence belongs to the TRAFAC class translation factor GTPase superfamily. Classic translation factor GTPase family. EF-Tu/EF-1A subfamily. As to quaternary structure, monomer.

It localises to the cytoplasm. It catalyses the reaction GTP + H2O = GDP + phosphate + H(+). Functionally, GTP hydrolase that promotes the GTP-dependent binding of aminoacyl-tRNA to the A-site of ribosomes during protein biosynthesis. In Bacillus cereus (strain ATCC 10987 / NRS 248), this protein is Elongation factor Tu.